Here is a 151-residue protein sequence, read N- to C-terminus: Ribosomal RNA large subunit methyltransferase H (151 aa).

Residues Leu-73, Gly-100, and Leu-119 to Met-124 contribute to the S-adenosyl-L-methionine site.

Belongs to the RNA methyltransferase RlmH family. As to quaternary structure, homodimer.

The protein resides in the cytoplasm. The enzyme catalyses pseudouridine(1915) in 23S rRNA + S-adenosyl-L-methionine = N(3)-methylpseudouridine(1915) in 23S rRNA + S-adenosyl-L-homocysteine + H(+). Its function is as follows. Specifically methylates the pseudouridine at position 1915 (m3Psi1915) in 23S rRNA. This Campylobacter concisus (strain 13826) protein is Ribosomal RNA large subunit methyltransferase H.